Consider the following 989-residue polypeptide: Phosphoenolpyruvate carboxylase (989 aa).

Residues His175 and Lys630 contribute to the active site.

Belongs to the PEPCase type 1 family. Mg(2+) is required as a cofactor.

It catalyses the reaction oxaloacetate + phosphate = phosphoenolpyruvate + hydrogencarbonate. Forms oxaloacetate, a four-carbon dicarboxylic acid source for the tricarboxylic acid cycle. The chain is Phosphoenolpyruvate carboxylase from Prochlorococcus marinus (strain MIT 9312).